Here is a 236-residue protein sequence, read N- to C-terminus: 2,3,4,5-tetrahydropyridine-2,6-dicarboxylate N-acetyltransferase (236 aa).

It belongs to the transferase hexapeptide repeat family. DapH subfamily.

The catalysed reaction is (S)-2,3,4,5-tetrahydrodipicolinate + acetyl-CoA + H2O = L-2-acetamido-6-oxoheptanedioate + CoA. The protein operates within amino-acid biosynthesis; L-lysine biosynthesis via DAP pathway; LL-2,6-diaminopimelate from (S)-tetrahydrodipicolinate (acetylase route): step 1/3. Functionally, catalyzes the transfer of an acetyl group from acetyl-CoA to tetrahydrodipicolinate. The polypeptide is 2,3,4,5-tetrahydropyridine-2,6-dicarboxylate N-acetyltransferase (Clostridium botulinum (strain Kyoto / Type A2)).